The following is a 173-amino-acid chain: Alkyl hydroperoxide reductase AhpD (173 aa).

The Proton donor role is filled by Cys-131. A disulfide bridge links Cys-131 with Cys-134. Cys-134 (cysteine sulfenic acid (-SOH) intermediate) is an active-site residue.

It belongs to the AhpD family.

The catalysed reaction is N(6)-[(R)-dihydrolipoyl]-L-lysyl-[lipoyl-carrier protein] + a hydroperoxide = N(6)-[(R)-lipoyl]-L-lysyl-[lipoyl-carrier protein] + an alcohol + H2O. In terms of biological role, antioxidant protein with alkyl hydroperoxidase activity. Required for the reduction of the AhpC active site cysteine residues and for the regeneration of the AhpC enzyme activity. The chain is Alkyl hydroperoxide reductase AhpD from Rhizorhabdus wittichii (strain DSM 6014 / CCUG 31198 / JCM 15750 / NBRC 105917 / EY 4224 / RW1) (Sphingomonas wittichii).